The following is a 128-amino-acid chain: MALPASMRLRGHRCFNRLHRIGRRHHGDWMVLRVMPEEPRLLRPELRRHPTRCCRCALVISSKVSKRAVRRNRLRRLLHQHLRQQLEHRGDLAGRWVLISLRPEASEAEPSQLLEECDSLLSSAGLGQ.

The protein belongs to the RnpA family. As to quaternary structure, consists of a catalytic RNA component (M1 or rnpB) and a protein subunit.

It carries out the reaction Endonucleolytic cleavage of RNA, removing 5'-extranucleotides from tRNA precursor.. In terms of biological role, RNaseP catalyzes the removal of the 5'-leader sequence from pre-tRNA to produce the mature 5'-terminus. It can also cleave other RNA substrates such as 4.5S RNA. The protein component plays an auxiliary but essential role in vivo by binding to the 5'-leader sequence and broadening the substrate specificity of the ribozyme. This chain is Ribonuclease P protein component, found in Parasynechococcus marenigrum (strain WH8102).